Consider the following 303-residue polypeptide: Glutamyl-Q tRNA(Asp) synthetase (303 aa).

L-glutamate is bound by residues 16–20 (RFAPS) and E52. A 'HIGH' region motif is present at residues 19-29 (PSPSGPLHFGS). Residues C108, C110, Y122, and C126 each contribute to the Zn(2+) site. L-glutamate-binding residues include Y177 and R195. Residues 233–237 (KLSKQ) carry the 'KMSKS' region motif. K236 lines the ATP pocket.

Belongs to the class-I aminoacyl-tRNA synthetase family. GluQ subfamily. Requires Zn(2+) as cofactor.

In terms of biological role, catalyzes the tRNA-independent activation of glutamate in presence of ATP and the subsequent transfer of glutamate onto a tRNA(Asp). Glutamate is transferred on the 2-amino-5-(4,5-dihydroxy-2-cyclopenten-1-yl) moiety of the queuosine in the wobble position of the QUC anticodon. This chain is Glutamyl-Q tRNA(Asp) synthetase, found in Vibrio vulnificus (strain YJ016).